A 129-amino-acid polypeptide reads, in one-letter code: Small ribosomal subunit protein uS9 (129 aa).

The protein belongs to the universal ribosomal protein uS9 family.

This is Small ribosomal subunit protein uS9 from Gemmatimonas aurantiaca (strain DSM 14586 / JCM 11422 / NBRC 100505 / T-27).